Reading from the N-terminus, the 317-residue chain is MSSSSDAIKAALEKGRAAGLSATGGKNADYIPFLASVPSDLFGLAVVTADGQTFKTGDADFAFAIESISKVFTLALVMEEIGPDSVREKVGADPTGLPFNSVIALELHNGKSLSPLVNAGAIATASLVPGDTADARWNNILECQCGFAGRRLKLSNEVNQSEQTTNFHNRAIAWLLYSAGTCYSDPMEAVDIYTRQCSTLVTATDLATMGATLAAGGVNPISGKRMVSAGNVAPILAEMTMEGLYTASGDWAYTVGLPGKSGVGGGIMAVVPGELAIAAFSPPLDPAGNSVKAMAAVAAVADSLGHNLYTTRGKVSS.

Substrate is bound by residues Ser67, Asn118, Glu162, Asn169, Tyr193, Tyr245, and Val263.

Belongs to the glutaminase family. As to quaternary structure, homotetramer.

The catalysed reaction is L-glutamine + H2O = L-glutamate + NH4(+). This Brucella canis (strain ATCC 23365 / NCTC 10854 / RM-666) protein is Glutaminase.